The primary structure comprises 207 residues: Small ribosomal subunit protein uS4 (207 aa).

Residues 96 to 159 (RRLDNVVYRL…RASTFIADNI (64 aa)) enclose the S4 RNA-binding domain.

This sequence belongs to the universal ribosomal protein uS4 family. As to quaternary structure, part of the 30S ribosomal subunit. Contacts protein S5. The interaction surface between S4 and S5 is involved in control of translational fidelity.

Functionally, one of the primary rRNA binding proteins, it binds directly to 16S rRNA where it nucleates assembly of the body of the 30S subunit. With S5 and S12 plays an important role in translational accuracy. The protein is Small ribosomal subunit protein uS4 of Leptospira borgpetersenii serovar Hardjo-bovis (strain JB197).